The chain runs to 234 residues: Zinc finger FYVE domain-containing protein 21 (234 aa).

The segment at D44–L104 adopts an FYVE-type zinc-finger fold. Zn(2+)-binding residues include C50, C53, C66, C69, C74, C77, C96, and C99. Positions A107–Q234 are PH-like.

As to quaternary structure, interacts with PTK2/FAK1.

The protein localises to the cell junction. It localises to the focal adhesion. Its subcellular location is the cytoplasmic vesicle. The protein resides in the endosome. Plays a role in cell adhesion, and thereby in cell motility which requires repeated formation and disassembly of focal adhesions. Regulates microtubule-induced PTK2/FAK1 dephosphorylation, an event important for focal adhesion disassembly, as well as integrin beta-1/ITGB1 cell surface expression. This chain is Zinc finger FYVE domain-containing protein 21 (ZFYVE21), found in Homo sapiens (Human).